We begin with the raw amino-acid sequence, 238 residues long: MARRNAASPQMGLDLAPAAAAVQRLCGVDEAGRGPLAGPVYAAAVILDPKRPIRGLADSKILTAAKREQLYEKICERALGWHIAFATVEEIDTLNILHASMLAMQRAVQGLAASGIVPDLVQVDGNRCPRVPFPVEAIVQGDALVKAISAASILAKVARDRELRVLHERYPQYGFDSHVGYGTPQHLAALAEFGATPHHRRSFAPVREALARLPMFTAMPATAEVIEPVATVSVTAAQ.

The RNase H type-2 domain occupies 23–215; sequence QRLCGVDEAG…VREALARLPM (193 aa). A divalent metal cation-binding residues include Asp-29, Glu-30, and Asp-124.

The protein belongs to the RNase HII family. It depends on Mn(2+) as a cofactor. Mg(2+) is required as a cofactor.

It is found in the cytoplasm. It carries out the reaction Endonucleolytic cleavage to 5'-phosphomonoester.. Endonuclease that specifically degrades the RNA of RNA-DNA hybrids. The sequence is that of Ribonuclease HII from Cupriavidus necator (strain ATCC 17699 / DSM 428 / KCTC 22496 / NCIMB 10442 / H16 / Stanier 337) (Ralstonia eutropha).